A 504-amino-acid polypeptide reads, in one-letter code: ATP synthase subunit beta (504 aa).

Gly181 to Thr188 is an ATP binding site.

It belongs to the ATPase alpha/beta chains family. In terms of assembly, F-type ATPases have 2 components, CF(1) - the catalytic core - and CF(0) - the membrane proton channel. CF(1) has five subunits: alpha(3), beta(3), gamma(1), delta(1), epsilon(1). CF(0) has three main subunits: a(1), b(2) and c(9-12). The alpha and beta chains form an alternating ring which encloses part of the gamma chain. CF(1) is attached to CF(0) by a central stalk formed by the gamma and epsilon chains, while a peripheral stalk is formed by the delta and b chains.

Its subcellular location is the cell inner membrane. The catalysed reaction is ATP + H2O + 4 H(+)(in) = ADP + phosphate + 5 H(+)(out). Functionally, produces ATP from ADP in the presence of a proton gradient across the membrane. The catalytic sites are hosted primarily by the beta subunits. The sequence is that of ATP synthase subunit beta from Ehrlichia ruminantium (strain Welgevonden).